Here is a 64-residue protein sequence, read N- to C-terminus: Movement protein TGBp3 (64 aa).

Residues 1–4 (MRSV) lie on the Lumenal side of the membrane. A helical membrane pass occupies residues 5–27 (ALTLCAIIAGYLLVSNLQNVFSP). The Cytoplasmic portion of the chain corresponds to 28–64 (EVCTLVITGESIRINGCNLSPAHFRAISHLKVLQIHL).

It belongs to the Tymovirales TGBp3 protein family.

The protein localises to the host endoplasmic reticulum membrane. In terms of biological role, plays a role in viral cell-to-cell propagation, by facilitating genome transport to neighboring plant cells through plasmosdesmata. May induce the formation of granular vesicles derived from the Endoplasmic reticulum, which align on actin filaments. This chain is Movement protein TGBp3, found in Lily symptomless virus (LSV).